A 284-amino-acid polypeptide reads, in one-letter code: Isopentenyl-diphosphate Delta-isomerase II, chloroplastic (284 aa).

The transit peptide at 1–45 (MSASSLFNLPLIRLRSLALSSSFSSFRFAHRPLSSISPRKLPNFR) directs the protein to the chloroplast. A46 is subject to N-acetylalanine. Position 88 (K88) interacts with substrate. Positions 92 and 104 each coordinate Mg(2+). A Nudix hydrolase domain is found at 102 to 254 (LLHRAFSVFL…GLKLSPWFRL (153 aa)). Substrate is bound by residues R123 and K127. C139 is an active-site residue. S140 provides a ligand contact to substrate. Positions 140–170 (SHPLYRESELIQDNALGVRNAAQRKLLDELG) match the Nudix box motif. Mg(2+) contacts are provided by E199 and E201. E201 is an active-site residue.

This sequence belongs to the IPP isomerase type 1 family. Mg(2+) is required as a cofactor.

The protein localises to the plastid. Its subcellular location is the chloroplast. It carries out the reaction isopentenyl diphosphate = dimethylallyl diphosphate. It functions in the pathway isoprenoid biosynthesis; dimethylallyl diphosphate biosynthesis; dimethylallyl diphosphate from isopentenyl diphosphate: step 1/1. The protein operates within porphyrin-containing compound metabolism; chlorophyll biosynthesis. Functionally, catalyzes the 1,3-allylic rearrangement of the homoallylic substrate isopentenyl (IPP) to its highly electrophilic allylic isomer, dimethylallyl diphosphate (DMAPP). This Arabidopsis thaliana (Mouse-ear cress) protein is Isopentenyl-diphosphate Delta-isomerase II, chloroplastic (IPP2).